A 421-amino-acid chain; its full sequence is 3-isopropylmalate dehydratase large subunit (421 aa).

Cys300, Cys360, and Cys363 together coordinate [4Fe-4S] cluster.

Belongs to the aconitase/IPM isomerase family. LeuC type 2 subfamily. In terms of assembly, heterodimer of LeuC and LeuD. Requires [4Fe-4S] cluster as cofactor.

The enzyme catalyses (2R,3S)-3-isopropylmalate = (2S)-2-isopropylmalate. It functions in the pathway amino-acid biosynthesis; L-leucine biosynthesis; L-leucine from 3-methyl-2-oxobutanoate: step 2/4. Functionally, catalyzes the isomerization between 2-isopropylmalate and 3-isopropylmalate, via the formation of 2-isopropylmaleate. The chain is 3-isopropylmalate dehydratase large subunit from Lachnoclostridium phytofermentans (strain ATCC 700394 / DSM 18823 / ISDg) (Clostridium phytofermentans).